The primary structure comprises 473 residues: Dol-P-Glc:Glc(2)Man(9)GlcNAc(2)-PP-Dol alpha-1,2-glucosyltransferase (473 aa).

Over 1 to 6 (MAQLEG) the chain is Cytoplasmic. A helical membrane pass occupies residues 7–27 (YCFSAALSCTFLVSCLLFSAF). Residues 28–64 (SRALREPYMDEIFHLPQAQRYCEGHFSLSQWDPMITT) lie on the Extracellular side of the membrane. The helical transmembrane segment at 65-85 (LPGLYLVSVGVVKPAIWIFAW) threads the bilayer. Residues 86 to 97 (SEHVVCSIGMLR) are Cytoplasmic-facing. The helical transmembrane segment at 98 to 118 (FVNLLFSVGNFYLLYLLFHKV) threads the bilayer. Residues 119-126 (QPRNKAAS) are Extracellular-facing. A helical transmembrane segment spans residues 127–147 (SIQRVLSTLTLAVFPTLYFFN). Residues 148 to 150 (FLY) lie on the Cytoplasmic side of the membrane. Residues 151–171 (YTEAGSMFFTLFAYLMCLYGN) traverse the membrane as a helical segment. Residues 172–175 (HKTS) lie on the Extracellular side of the membrane. The chain crosses the membrane as a helical span at residues 176-196 (AFLGFCGFMFRQTNIIWAVFC). Residues 197 to 256 (AGNVIAQKLTEAWKTELQKKEDRLPPIKGPFAEFRKILQFLLAYSMSFKNLSMLFCLTWP) are Cytoplasmic-facing. A helical transmembrane segment spans residues 257–277 (YILLGFLFCAFVVVNGGIVIG). Over 278-283 (DRSSHE) the chain is Extracellular. A helical membrane pass occupies residues 284 to 304 (ACLHFPQLFYFFSFTLFFSFP). The Cytoplasmic portion of the chain corresponds to 305–317 (HLLSPSKIKTFLS). Residues 318–338 (LVWKHGILFLVVTLVSVFLVW) traverse the membrane as a helical segment. Residues 339–365 (KFTYAHKYLLADNRHYTFYVWKRVFQR) lie on the Extracellular side of the membrane. Residues 366 to 386 (YAILKYLLVPAYIFAGWSIAD) traverse the membrane as a helical segment. At 387 to 392 (SLKSKP) the chain is on the cytoplasmic side. The chain crosses the membrane as a helical span at residues 393–413 (IFWNLMFFICLFIVIVPQKLL). Topologically, residues 414-436 (EFRYFILPYVIYRLNITLPPTSR) are extracellular. Residues 437-457 (LVCELSCYAIVNFITFYIFLN) form a helical membrane-spanning segment. The Cytoplasmic portion of the chain corresponds to 458–473 (KTFQWPNSQDIQRFMW).

It belongs to the ALG10 glucosyltransferase family. Interacts with KCNH1; may regulate KCNH1, possibly by regulating its N-glycosylation. Interacts with KCNH2; may reduce KCNH2 sensitivity to classic proarrhythmic drug blockade, possibly by regulating its N-glycosylation. In terms of tissue distribution, highly expressed in heart, placenta, liver, kidney and pancreas. Weakly expressed in lung, skeletal muscle and brain.

It is found in the endoplasmic reticulum membrane. It carries out the reaction an alpha-D-Glc-(1-&gt;3)-alpha-D-Glc-(1-&gt;3)-alpha-D-Man-(1-&gt;2)-alpha-D-Man-(1-&gt;2)-alpha-D-Man-(1-&gt;3)-[alpha-D-Man-(1-&gt;2)-alpha-D-Man-(1-&gt;3)-[alpha-D-Man-(1-&gt;2)-alpha-D-Man-(1-&gt;6)]-alpha-D-Man-(1-&gt;6)]-beta-D-Man-(1-&gt;4)-beta-D-GlcNAc-(1-&gt;4)-alpha-D-GlcNAc-diphospho-di-trans,poly-cis-dolichol + a di-trans,poly-cis-dolichyl beta-D-glucosyl phosphate = a alpha-D-Glc-(1-&gt;2)-alpha-D-Glc-(1-&gt;3)-alpha-D-Glc-(1-&gt;3)-alpha-D-Man-(1-&gt;2)-alpha-D-Man-(1-&gt;2)-alpha-D-Man-(1-&gt;3)-[alpha-D-Man-(1-&gt;2)-alpha-D-Man-(1-&gt;3)-[alpha-D-Man-(1-&gt;2)-alpha-D-Man-(1-&gt;6)]-alpha-D-Man-(1-&gt;6)]-beta-D-Man-(1-&gt;4)-beta-D-GlcNAc-(1-&gt;4)-alpha-D-GlcNAc-diphospho-di-trans,poly-cis-dolichol + a di-trans,poly-cis-dolichyl phosphate + H(+). Its pathway is protein modification; protein glycosylation. Functionally, dol-P-Glc:Glc(2)Man(9)GlcNAc(2)-PP-Dol alpha-1,2-glucosyltransferase that operates in the biosynthetic pathway of dolichol-linked oligosaccharides, the glycan precursors employed in protein asparagine (N)-glycosylation. The assembly of dolichol-linked oligosaccharides begins on the cytosolic side of the endoplasmic reticulum membrane and finishes in its lumen. The sequential addition of sugars to dolichol pyrophosphate produces dolichol-linked oligosaccharides containing fourteen sugars, including two GlcNAcs, nine mannoses and three glucoses. Once assembled, the oligosaccharide is transferred from the lipid to nascent proteins by oligosaccharyltransferases. In the lumen of the endoplasmic reticulum, adds the third and last glucose residue from dolichyl phosphate glucose (Dol-P-Glc) onto the lipid-linked oligosaccharide intermediate Glc(2)Man(9)GlcNAc(2)-PP-Dol to produce Glc(3)Man(9)GlcNAc(2)-PP-Dol. In Homo sapiens (Human), this protein is Dol-P-Glc:Glc(2)Man(9)GlcNAc(2)-PP-Dol alpha-1,2-glucosyltransferase.